The chain runs to 60 residues: GPMRIPEKHRIVREYIRKFGLQLNEFVQETENAWYYIKNIRKKVHEVKKDPGLLKYPVKP.

An FAD-binding site is contributed by 1 to 4; sequence GPMR. Substrate is bound at residue Arg4.

Belongs to the flavin monoamine oxidase family. FIG1 subfamily. As to quaternary structure, homodimer; non-covalently linked. FAD is required as a cofactor. Contains 2 disulfide bonds. In terms of processing, N-glycosylated. As to expression, expressed by the venom gland.

Its subcellular location is the secreted. It catalyses the reaction an L-alpha-amino acid + O2 + H2O = a 2-oxocarboxylate + H2O2 + NH4(+). In terms of biological role, catalyzes an oxidative deamination of predominantly hydrophobic and aromatic L-amino acids, thus producing hydrogen peroxide that may contribute to the diverse toxic effects of this enzyme. Exhibits diverse biological activities, such as hemorrhage, hemolysis, edema, apoptosis of vascular endothelial cells or tumor cell lines, antibacterial and antiparasitic activities, as well as regulation of platelet aggregation. Effects of snake L-amino oxidases on platelets are controversial, since they either induce aggregation or inhibit agonist-induced aggregation. These different effects are probably due to different experimental conditions. This Bitis gabonica (Gaboon adder) protein is L-amino-acid oxidase.